The following is a 114-amino-acid chain: Period circadian protein (114 aa).

Residues 23 to 114 (VTNTSIAGTG…VTLTESLLNK (92 aa)) form a disordered region. Repeat copies occupy residues 30–31 (GT), 33–34 (GT), 36–37 (GT), 38–39 (GT), 40–41 (GT), 42–43 (GT), 44–45 (GT), 46–47 (GT), 48–49 (GT), 50–51 (GT), 52–53 (GT), 54–55 (GT), 56–57 (GT), and 58–59 (GT). The segment covering 30–79 (GTGGTGGTGTGTGTGTGTGTGTGTGTGTGTDTGTGTGTGTETGTGTGTGT) has biased composition (gly residues). The segment at 30-87 (GTGGTGGTGTGTGTGTGTGTGTGTGTGTGTDTGTGTGTGTETGTGTGTGTRNGTNSGT) is 28 X 2 AA approximate tandem repeats of G-[TN]. One copy of the 15; approximate repeat lies at 60–61 (DT). Tandem repeats lie at residues 62-63 (GT), 64-65 (GT), 66-67 (GT), and 68-69 (GT). The stretch at 70–71 (ET) is one 20; approximate repeat. Tandem repeats lie at residues 72-73 (GT), 74-75 (GT), 76-77 (GT), and 78-79 (GT). A 25; approximate repeat occupies 80–81 (RN). Residues 80–91 (RNGTNSGTKTGT) show a composition bias toward low complexity. Copy 26 of the repeat occupies 82–83 (GT). Residues 84-85 (NS) form a 27; approximate repeat. Repeat unit 28 spans residues 86–87 (GT). Positions 105–114 (VTLTESLLNK) are enriched in polar residues.

In terms of assembly, forms a heterodimer with timeless (TIM); the complex then translocates into the nucleus. Phosphorylated with a circadian rhythmicity, probably by the double-time protein (dbt). Phosphorylation could be implicated in the stability of per monomer and in the formation of heterodimer per-tim.

It is found in the nucleus. Its subcellular location is the cytoplasm. The protein localises to the perinuclear region. Its function is as follows. Essential for biological clock functions. Determines the period length of circadian and ultradian rhythms; an increase in PER dosage leads to shortened circadian rhythms and a decrease leads to lengthened circadian rhythms. Essential for the circadian rhythmicity of locomotor activity, eclosion behavior, and for the rhythmic component of the male courtship song that originates in the thoracic nervous system. The biological cycle depends on the rhythmic formation and nuclear localization of the TIM-PER complex. Light induces the degradation of TIM, which promotes elimination of PER. Nuclear activity of the heterodimer coordinatively regulates PER and TIM transcription through a negative feedback loop. Behaves as a negative element in circadian transcriptional loop. Does not appear to bind DNA, suggesting indirect transcriptional inhibition. The sequence is that of Period circadian protein (per) from Drosophila orena (Fruit fly).